The sequence spans 249 residues: Phosphate import ATP-binding protein PstB 3 (249 aa).

The region spanning 4–244 (LVINNLDLYY…PQDERTENYI (241 aa)) is the ABC transporter domain. 36-43 (GPSGCGKS) serves as a coordination point for ATP.

The protein belongs to the ABC transporter superfamily. Phosphate importer (TC 3.A.1.7) family. In terms of assembly, the complex is composed of two ATP-binding proteins (PstB), two transmembrane proteins (PstC and PstA) and a solute-binding protein (PstS).

Its subcellular location is the cell membrane. The catalysed reaction is phosphate(out) + ATP + H2O = ADP + 2 phosphate(in) + H(+). In terms of biological role, part of the ABC transporter complex PstSACB involved in phosphate import. Responsible for energy coupling to the transport system. This chain is Phosphate import ATP-binding protein PstB 3, found in Streptococcus agalactiae serotype Ia (strain ATCC 27591 / A909 / CDC SS700).